The sequence spans 282 residues: Probable aquaporin PIP2-6 (282 aa).

A run of 2 helical transmembrane segments spans residues Ala39–Ile59 and Leu76–Ile96. An NPA 1 motif is present at residues Asn102–Ala104. The next 3 membrane-spanning stretches (helical) occupy residues Val121–Ile141, Gly163–Ala183, and Val197–Ile217. An NPA 2 motif is present at residues Asn223–Ala225. Residues Ile245–Leu265 form a helical membrane-spanning segment.

It belongs to the MIP/aquaporin (TC 1.A.8) family. PIP (TC 1.A.8.11) subfamily. Expressed in roots and leaves.

Its subcellular location is the cell membrane. Its function is as follows. Aquaporins facilitate the transport of water and small neutral solutes across cell membranes. In Oryza sativa subsp. japonica (Rice), this protein is Probable aquaporin PIP2-6 (PIP2-6).